We begin with the raw amino-acid sequence, 559 residues long: Tissue-type plasminogen activator (559 aa).

A signal peptide spans 1 to 17; it reads MKGELLCVLLLCGVAFT. Positions 18–29 are excised as a propeptide; the sequence is LPDQGIHRRFRR. A propeptide spans 30–32 (removed by plasmin); the sequence is GAR. Residues 36–78 form the Fibronectin type-I domain; it reads ATCRDEQTQTTYQQHQSWLRPMLRGNRVEYCRCNSGLAQCHSV. Intrachain disulfides connect C38-C68, C66-C75, C83-C94, C88-C105, C107-C116, C124-C205, C145-C187, C176-C200, C213-C294, C234-C276, C265-C289, C297-C428, C340-C356, C348-C417, C442-C516, C474-C490, and C506-C534. Residues 39–49 are important for binding to annexin A2; it reads RDEQTQTTYQQ. The region spanning 79 to 117 is the EGF-like domain; sequence PVRSCSEPRCFNGGTCQQALYFSDFVCQCPDGFVGKRCD. 2 Kringle domains span residues 124-205 and 213-294; these read CFEG…TPAC and CYVG…MSPC. N149 carries an N-linked (GlcNAc...) asparagine glycan. The Peptidase S1 domain occupies 309-558; that stretch reads IKGGLFTDIT…YLNWIQDNMK (250 aa). Residues H355 and D404 each act as charge relay system in the active site. N481 is a glycosylation site (N-linked (GlcNAc...) asparagine). S510 acts as the Charge relay system in catalysis.

The protein belongs to the peptidase S1 family. Heterodimer of chain A and chain B held by a disulfide bond. Binds to fibrin with high affinity. This interaction leads to an increase in the catalytic efficiency of the enzyme due to an increase in affinity for plasminogen. Similarly, binding to heparin increases the activation of plasminogen. Binds to annexin A2, cytokeratin-8, fibronectin and laminin. Binds to mannose receptor and the low-density lipoprotein receptor-related protein (LRP1); these proteins are involved in TPA clearance. Binds LRP1B; binding is followed by internalization and degradation. Forms heterodimer with SERPINA5. Interacts with SERPINE1. In complex with SERPINE1, interacts with SORL1. In terms of processing, the single chain, almost fully active enzyme, can be further processed into a two-chain fully active form by a cleavage after Arg-308 catalyzed by plasmin, tissue kallikrein or factor Xa.

It is found in the secreted. It localises to the extracellular space. It catalyses the reaction Specific cleavage of Arg-|-Val bond in plasminogen to form plasmin.. Inhibited by SERPINA5. Inhibited by SERPINE1. In terms of biological role, converts the abundant, but inactive, zymogen plasminogen to plasmin by hydrolyzing a single Arg-Val bond in plasminogen. By controlling plasmin-mediated proteolysis, it plays an important role in tissue remodeling and degradation, in cell migration and many other physiopathological events. During oocyte activation, plays a role in cortical granule reaction in the zona reaction, which contributes to the block to polyspermy. This Rattus norvegicus (Rat) protein is Tissue-type plasminogen activator (Plat).